Here is a 347-residue protein sequence, read N- to C-terminus: Protein-glutamate methylesterase/protein-glutamine glutaminase (347 aa).

The region spanning 3–119 (EALVVDDSHF…STELSGHSEE (117 aa)) is the Response regulatory domain. Asp53 bears the 4-aspartylphosphate mark. The disordered stretch occupies residues 132–154 (PTAGHDVEMEPASPPDATTSEYA). The CheB-type methylesterase domain occupies 152–346 (EYADNPTLLI…EAIADSIRRT (195 aa)). Active-site residues include Ser164, His191, and Asp288.

This sequence belongs to the CheB family. Post-translationally, phosphorylated by CheA. Phosphorylation of the N-terminal regulatory domain activates the methylesterase activity.

The protein resides in the cytoplasm. The enzyme catalyses [protein]-L-glutamate 5-O-methyl ester + H2O = L-glutamyl-[protein] + methanol + H(+). It catalyses the reaction L-glutaminyl-[protein] + H2O = L-glutamyl-[protein] + NH4(+). Involved in the modulation of the chemotaxis system; catalyzes the demethylation of specific methylglutamate residues introduced into the Htr transducer proteins (methyl-accepting chemotaxis proteins) by CheR. Also required for Htr deamidations, at least at a specific glutamine-glutamate pair in HTR-II and a specific aspartate-glutamine pair in Htr4. The protein is Protein-glutamate methylesterase/protein-glutamine glutaminase of Halobacterium salinarum (strain ATCC 29341 / DSM 671 / R1).